We begin with the raw amino-acid sequence, 208 residues long: MASKCPKCDKTVYFAEKVSSLGKDWHRFCLRCEHCSKTLTPGGHAEHDGKPFCHKPCYATLFGPKGVNIGGAGSYIYEKPSAEKPQVTGPIEVPVARTEERKASGPPKGPSKASSVTTFTGEPNMCPRCNKRVYFAEKVTSLGKDWHRPCLRCERCGKTLTPGGHAEHDGQPYCHKPCYGILFGPKGVNTGAVGSYIYDKDPEGKAQP.

Residues 5 to 57 form the LIM zinc-binding 1 domain; sequence CPKCDKTVYFAEKVSSLGKDWHRFCLRCEHCSKTLTPGGHAEHDGKPFCHKPC. N6-acetyllysine is present on Lys-23. A disordered region spans residues 98–117; that stretch reads TEERKASGPPKGPSKASSVT. Ser-104 is modified (phosphoserine). A compositionally biased stretch (low complexity) spans 104 to 115; that stretch reads SGPPKGPSKASS. Positions 126–178 constitute an LIM zinc-binding 2 domain; it reads CPRCNKRVYFAEKVTSLGKDWHRPCLRCERCGKTLTPGGHAEHDGQPYCHKPC. Residues Lys-138 and Lys-144 each carry the N6-acetyllysine modification.

Interacts with TGFB1I1.

The protein is Cysteine-rich protein 2 (CRIP2) of Bos taurus (Bovine).